The sequence spans 457 residues: UDP-N-acetyl-alpha-D-muramoyl-L-alanyl-L-glutamate epimerase (457 aa).

The protein belongs to the MurL family.

The enzyme catalyses UDP-N-acetyl-alpha-D-muramoyl-L-alanyl-L-glutamate + ATP + H2O = UDP-N-acetyl-alpha-D-muramoyl-L-alanyl-D-glutamate + AMP + diphosphate + H(+). It participates in cell wall biogenesis; peptidoglycan biosynthesis. Functionally, cell wall formation. Catalyzes epimerization of the terminal L-glutamate in UDP-N-acetyl-alpha-D-muramoyl-L-alanyl-L-glutamate. This chain is UDP-N-acetyl-alpha-D-muramoyl-L-alanyl-L-glutamate epimerase, found in Salinispora tropica (strain ATCC BAA-916 / DSM 44818 / JCM 13857 / NBRC 105044 / CNB-440).